Reading from the N-terminus, the 290-residue chain is Bifunctional protein FolD (290 aa).

NADP(+) contacts are provided by residues 166-168 (GQS), Ser-191, and Ile-232.

Belongs to the tetrahydrofolate dehydrogenase/cyclohydrolase family. In terms of assembly, homodimer.

The enzyme catalyses (6R)-5,10-methylene-5,6,7,8-tetrahydrofolate + NADP(+) = (6R)-5,10-methenyltetrahydrofolate + NADPH. The catalysed reaction is (6R)-5,10-methenyltetrahydrofolate + H2O = (6R)-10-formyltetrahydrofolate + H(+). Its pathway is one-carbon metabolism; tetrahydrofolate interconversion. Its function is as follows. Catalyzes the oxidation of 5,10-methylenetetrahydrofolate to 5,10-methenyltetrahydrofolate and then the hydrolysis of 5,10-methenyltetrahydrofolate to 10-formyltetrahydrofolate. In Halorhodospira halophila (strain DSM 244 / SL1) (Ectothiorhodospira halophila (strain DSM 244 / SL1)), this protein is Bifunctional protein FolD.